A 416-amino-acid polypeptide reads, in one-letter code: CC-adding tRNA nucleotidyltransferase (416 aa).

Residue 31–34 (GAVR) participates in CTP binding. Residues Asp-46 and Asp-48 each coordinate Mg(2+). Residues 106–107 (RD), Asn-111, 148–157 (DPLRLLRAYR), and Arg-188 contribute to the CTP site.

It belongs to the tRNA nucleotidyltransferase/poly(A) polymerase family. Mg(2+) serves as cofactor.

The enzyme catalyses a tRNA precursor + 2 CTP = a tRNA with a 3' CC end + 2 diphosphate. TRNA nucleotidyltransferase involved in the synthesis of the tRNA CCA terminus. Adds the two cytidine residues to tRNA. This Synechocystis sp. (strain ATCC 27184 / PCC 6803 / Kazusa) protein is CC-adding tRNA nucleotidyltransferase.